The primary structure comprises 356 residues: 3-dehydroquinate synthase (356 aa).

Residues 106-110 (GVVGD), 130-131 (TT), Lys143, and Lys152 contribute to the NAD(+) site. Positions 185, 248, and 265 each coordinate Zn(2+).

It belongs to the sugar phosphate cyclases superfamily. Dehydroquinate synthase family. Requires Co(2+) as cofactor. Zn(2+) is required as a cofactor. The cofactor is NAD(+).

The protein resides in the cytoplasm. It catalyses the reaction 7-phospho-2-dehydro-3-deoxy-D-arabino-heptonate = 3-dehydroquinate + phosphate. The protein operates within metabolic intermediate biosynthesis; chorismate biosynthesis; chorismate from D-erythrose 4-phosphate and phosphoenolpyruvate: step 2/7. Its function is as follows. Catalyzes the conversion of 3-deoxy-D-arabino-heptulosonate 7-phosphate (DAHP) to dehydroquinate (DHQ). The chain is 3-dehydroquinate synthase from Thermoanaerobacter sp. (strain X514).